The sequence spans 75 residues: Protein TM_1420 (75 aa).

4 residues coordinate [2Fe-2S] cluster: Cys6, Cys11, Cys39, and Cys43.

[2Fe-2S] cluster is required as a cofactor.

Might be part of a multi-protein complex, possibly involved in metal cluster assembly. The chain is Protein TM_1420 from Thermotoga maritima (strain ATCC 43589 / DSM 3109 / JCM 10099 / NBRC 100826 / MSB8).